Here is a 278-residue protein sequence, read N- to C-terminus: MASGKHHQPGGTRSLTMQKVSLRVTPRLVLEVNRHNAICVATNVPEFYNARGDLNVRDLRAHVKARMISSQFCGYILVSLLDSEDQVDHLNIFPHVFSERMILYKPNNVNLMEMCALLSMIENAKSPSIGLCREVLGRLTLLHSKCNNLDSLFLYNGARTLLSTLVKYHDLEEGAATPGPWNEGLSLFKLHKELKRAPSEARDLMQSLFLTSGKMGCLARSPKDYCADLNKEEDANSGFTFNLFYQDSLLTKHFQCQTVLQTLRRKCLGSDTVSKIIP.

Belongs to the herpesviridae cytoplasmic envelopment protein 1 family. In terms of assembly, interacts with BSRF1 tegument protein; the BBRF2-BSRF1 complexes oligomerize and might play a role in tethering the viral nucleocapsids to the host Golgi membrane during secondary envelopment.

Its subcellular location is the virion. It is found in the virion tegument. The protein resides in the host cytoplasm. It localises to the host Golgi apparatus. Its function is as follows. Plays a critical role in cytoplasmic virus egress. Participates in the final step of tegumentation and envelope acquisition within the host cytoplasm. The protein is Cytoplasmic envelopment protein 1 of Homo sapiens (Human).